Here is a 306-residue protein sequence, read N- to C-terminus: Aspartate carbamoyltransferase catalytic subunit (306 aa).

Carbamoyl phosphate is bound by residues R55 and T56. K84 contributes to the L-aspartate binding site. Positions 105, 133, and 136 each coordinate carbamoyl phosphate. 2 residues coordinate L-aspartate: R166 and R227. The carbamoyl phosphate site is built by L265 and P266.

It belongs to the aspartate/ornithine carbamoyltransferase superfamily. ATCase family. As to quaternary structure, heterododecamer (2C3:3R2) of six catalytic PyrB chains organized as two trimers (C3), and six regulatory PyrI chains organized as three dimers (R2).

The enzyme catalyses carbamoyl phosphate + L-aspartate = N-carbamoyl-L-aspartate + phosphate + H(+). It functions in the pathway pyrimidine metabolism; UMP biosynthesis via de novo pathway; (S)-dihydroorotate from bicarbonate: step 2/3. Catalyzes the condensation of carbamoyl phosphate and aspartate to form carbamoyl aspartate and inorganic phosphate, the committed step in the de novo pyrimidine nucleotide biosynthesis pathway. This chain is Aspartate carbamoyltransferase catalytic subunit, found in Neisseria gonorrhoeae (strain NCCP11945).